We begin with the raw amino-acid sequence, 222 residues long: Putative serine proteinase inhibitor 2 homolog second part (222 aa).

The protein belongs to the serpin family. Poxviruses subfamily.

In Homo sapiens (Human), this protein is Putative serine proteinase inhibitor 2 homolog second part.